A 474-amino-acid polypeptide reads, in one-letter code: tRNA-2-methylthio-N(6)-dimethylallyladenosine synthase (474 aa).

The MTTase N-terminal domain maps to 3 to 120 (KKLHIKTWGC…LPEMINSVRG (118 aa)). [4Fe-4S] cluster-binding residues include Cys-12, Cys-49, Cys-83, Cys-157, Cys-161, and Cys-164. Residues 143–378 (RADGPSAFVS…INQQVTAWSR (236 aa)) enclose the Radical SAM core domain. The 64-residue stretch at 378–441 (RRMLGTTQRI…TNSMRGKVVR (64 aa)) folds into the TRAM domain.

The protein belongs to the methylthiotransferase family. MiaB subfamily. In terms of assembly, monomer. It depends on [4Fe-4S] cluster as a cofactor.

Its subcellular location is the cytoplasm. It catalyses the reaction N(6)-dimethylallyladenosine(37) in tRNA + (sulfur carrier)-SH + AH2 + 2 S-adenosyl-L-methionine = 2-methylsulfanyl-N(6)-dimethylallyladenosine(37) in tRNA + (sulfur carrier)-H + 5'-deoxyadenosine + L-methionine + A + S-adenosyl-L-homocysteine + 2 H(+). Catalyzes the methylthiolation of N6-(dimethylallyl)adenosine (i(6)A), leading to the formation of 2-methylthio-N6-(dimethylallyl)adenosine (ms(2)i(6)A) at position 37 in tRNAs that read codons beginning with uridine. The polypeptide is tRNA-2-methylthio-N(6)-dimethylallyladenosine synthase (Enterobacter sp. (strain 638)).